We begin with the raw amino-acid sequence, 431 residues long: Glucose-1-phosphate adenylyltransferase (431 aa).

Residue Lys39 participates in beta-D-fructose 1,6-bisphosphate binding. Positions 40, 46, and 52 each coordinate AMP. Residue Tyr114 coordinates alpha-D-glucose 1-phosphate. Arg130 lines the AMP pocket. Residues Gly179, Glu194 to Lys195, and Ser212 each bind alpha-D-glucose 1-phosphate. Residues Glu370 and Arg386 each coordinate AMP. Beta-D-fructose 1,6-bisphosphate is bound by residues Arg419–Arg423 and Gln429–Arg431.

Belongs to the bacterial/plant glucose-1-phosphate adenylyltransferase family. In terms of assembly, homotetramer.

It carries out the reaction alpha-D-glucose 1-phosphate + ATP + H(+) = ADP-alpha-D-glucose + diphosphate. Its pathway is glycan biosynthesis; glycogen biosynthesis. Allosterically activated by fructose-1,6-bisphosphate (F16BP) and inhibited by AMP. Functionally, involved in the biosynthesis of ADP-glucose, a building block required for the elongation reactions to produce glycogen. Catalyzes the reaction between ATP and alpha-D-glucose 1-phosphate (G1P) to produce pyrophosphate and ADP-Glc. This Shigella dysenteriae serotype 1 (strain Sd197) protein is Glucose-1-phosphate adenylyltransferase.